Consider the following 442-residue polypeptide: DDB1- and CUL4-associated factor 12-B (442 aa).

Basic residues predominate over residues 1–13 (MTRRPVSRKRRAT). Residues 1 to 31 (MTRRPVSRKRRATHGTGPGEQSDWDHSAHKR) are disordered. WD repeat units follow at residues 132–173 (SHQS…PVCV), 177–215 (GHNDWIFSIAWISDTMAVSGSRDGFMALWEMTDEVVNKR), 245–284 (PVNCKVRALAFNGNNKELGAVSLDGFFHLWKAEQTLSKLL), and 333–370 (EQGSGIRSVSFYEHIVTVGTGQGALLFYDIRAQRFLED).

The protein belongs to the WD repeat DCAF12 family. In terms of assembly, component of the DCX(DCAF12) E3 ubiquitin ligase complex, at least composed of cul4 (cul4a or cul4b), ddb1, dcaf12 and rbx1.

It localises to the cytoplasm. The protein localises to the cytoskeleton. The protein resides in the microtubule organizing center. Its subcellular location is the centrosome. It is found in the nucleus. It functions in the pathway protein modification; protein ubiquitination. Functionally, substrate-recognition component of a DCX (DDB1-CUL4-X-box) E3 ubiquitin-protein ligase complex of the DesCEND (destruction via C-end degrons) pathway, which recognizes a C-degron located at the extreme C terminus of target proteins, leading to their ubiquitination and degradation. The C-degron recognized by the DesCEND pathway is usually a motif of less than ten residues and can be present in full-length proteins, truncated proteins or proteolytically cleaved forms. The DCX(DCAF12) complex specifically recognizes proteins with a diglutamate (Glu-Glu) at the C-terminus leading to their ubiquitination and degradation. Also directly recognizes the C-terminal glutamate-leucine (Glu-Leu) degron as an alternative degron in proteins leading to their ubiquitination and degradation. The chain is DDB1- and CUL4-associated factor 12-B (dcaf12-b) from Xenopus laevis (African clawed frog).